Consider the following 228-residue polypeptide: Large ribosomal subunit protein mL64 (228 aa).

Disordered regions lie at residues 20-44 (PRSR…DREN) and 186-228 (QRKR…KPSS). Residues 98-207 (TMQESLRVQQ…KKEARIAAMA (110 aa)) adopt a coiled-coil conformation. Positions 184-200 (KQQRKRLKEERQRQKKE) match the Nuclear localization signal motif. The segment covering 186-202 (QRKRLKEERQRQKKEAR) has biased composition (basic and acidic residues). Residues 212–228 (QDSAEAQDSAASGKPSS) show a composition bias toward low complexity.

The protein belongs to the mitochondrion-specific ribosomal protein mL64 family. Component of the mitochondrial ribosome large subunit (39S) which comprises a 16S rRNA and about 50 distinct proteins. Interacts with GADD45A, GADD45B and GADD45G. Interacts with NR4A1 via the NR4A1 AB domain. Interacts with ATAD3A and ATAD3B.

The protein resides in the mitochondrion. It is found in the nucleus. Functionally, acts as a negative regulator of G1 to S cell cycle phase progression by inhibiting cyclin-dependent kinases. Inhibitory effects are additive with GADD45 proteins but also occur in the absence of GADD45 proteins. Acts as a repressor of the orphan nuclear receptor NR4A1 by inhibiting AB domain-mediated transcriptional activity. May be involved in the hormone-mediated regulation of NR4A1 transcriptional activity. May play a role in mitochondrial protein synthesis. This Rattus norvegicus (Rat) protein is Large ribosomal subunit protein mL64 (Gadd45gip1).